A 119-amino-acid polypeptide reads, in one-letter code: Protein TusC (119 aa).

Belongs to the DsrF/TusC family. In terms of assembly, heterohexamer, formed by a dimer of trimers. The hexameric TusBCD complex contains 2 copies each of TusB, TusC and TusD. The TusBCD complex interacts with TusE.

It localises to the cytoplasm. In terms of biological role, part of a sulfur-relay system required for 2-thiolation of 5-methylaminomethyl-2-thiouridine (mnm(5)s(2)U) at tRNA wobble positions. The protein is Protein TusC of Shigella flexneri serotype 5b (strain 8401).